Here is a 144-residue protein sequence, read N- to C-terminus: Transcription antitermination protein NusB (144 aa).

Belongs to the NusB family.

Involved in transcription antitermination. Required for transcription of ribosomal RNA (rRNA) genes. Binds specifically to the boxA antiterminator sequence of the ribosomal RNA (rrn) operons. This chain is Transcription antitermination protein NusB, found in Dictyoglomus thermophilum (strain ATCC 35947 / DSM 3960 / H-6-12).